The sequence spans 338 residues: UDP-glucose 4-epimerase (338 aa).

NAD(+) contacts are provided by residues 11–12 (YI), 31–36 (DNLCNS), 58–59 (DI), 80–84 (FAGLK), N99, S124, Y149, K153, and F178. S124 and Y149 together coordinate substrate. The active-site Proton acceptor is Y149. Substrate is bound by residues N179, 199-200 (NL), 216-218 (AVF), R231, 292-295 (RDGD), and Y299.

This sequence belongs to the NAD(P)-dependent epimerase/dehydratase family. In terms of assembly, homodimer. Requires NAD(+) as cofactor.

It carries out the reaction UDP-alpha-D-glucose = UDP-alpha-D-galactose. The protein operates within carbohydrate metabolism; galactose metabolism. Functionally, involved in the metabolism of galactose. Catalyzes the conversion of UDP-galactose (UDP-Gal) to UDP-glucose (UDP-Glc) through a mechanism involving the transient reduction of NAD. This is UDP-glucose 4-epimerase (galE) from Salmonella typhimurium (strain LT2 / SGSC1412 / ATCC 700720).